Here is a 171-residue protein sequence, read N- to C-terminus: Peptide methionine sulfoxide reductase MsrA (171 aa).

C13 is a catalytic residue.

It belongs to the MsrA Met sulfoxide reductase family.

It catalyses the reaction L-methionyl-[protein] + [thioredoxin]-disulfide + H2O = L-methionyl-(S)-S-oxide-[protein] + [thioredoxin]-dithiol. It carries out the reaction [thioredoxin]-disulfide + L-methionine + H2O = L-methionine (S)-S-oxide + [thioredoxin]-dithiol. In terms of biological role, has an important function as a repair enzyme for proteins that have been inactivated by oxidation. Catalyzes the reversible oxidation-reduction of methionine sulfoxide in proteins to methionine. This Mycobacterium sp. (strain JLS) protein is Peptide methionine sulfoxide reductase MsrA.